The following is an 812-amino-acid chain: Zn(2)-C6 fungal-type transcription factor pigI (812 aa).

The disordered stretch occupies residues 42-74; the sequence is GCLHPRSPPRDRTAMADNSNSSPPASRRREKPQ. Residues 77 to 105 constitute a DNA-binding region (zn(2)-C6 fungal-type); it reads CTLCRRRKLRCDRRQPCETCVRRGLSLSC.

Its subcellular location is the nucleus. Functionally, zn(2)-C6 fungal-type transcription factor; part of the gene cluster that mediates the biosynthesis of azaphilone pigments (MonAzPs), a complex mixture of compounds with a common azaphilone skeleton very widely used as food colorants. Acts probably as a negative regulator of the azaphilone pigments (MonAzPs) gene cluster. This Monascus ruber (Mold) protein is Zn(2)-C6 fungal-type transcription factor pigI.